We begin with the raw amino-acid sequence, 300 residues long: MEKTKEKAERILLEPYRYLLQLPGKQVRSKLSQAFNHWLKVPEDKLQIIIEVTEMLHNASLLIDDIEDSSKLRRGFPVAHSIYGVPSVINSANYVYFLGLEKVLTLDHPDAVKLFTRQLLELHQGQGLDIYWRDTYTCPTEEEYKAMVLQKTGGLFGLAVGLMQLFSDYKEDLKPLLDTLGLFFQIRDDYANLHSKEYSENKSFCEDLTEGKFSFPTIHAIWSRPESTQVQNILRQRTENIDIKKYCVQYLEDVGSFAYTRHTLRELEAKAYKQIEACGGNPSLVALVKHLSKMFTEENK.

An N-acetylmethionine modification is found at M1. The isopentenyl diphosphate site is built by K25, R28, and H57. D64 and D68 together coordinate Mg(2+). R73 is a binding site for dimethylallyl diphosphate. Isopentenyl diphosphate is bound at residue R74. Residues K151, T152, Q185, K202, and K212 each coordinate dimethylallyl diphosphate.

This sequence belongs to the FPP/GGPP synthase family. Homohexamer; trimer of homodimers. Requires Mg(2+) as cofactor.

Its subcellular location is the cytoplasm. It localises to the perinuclear region. The protein resides in the myofibril. It is found in the sarcomere. The protein localises to the z line. It carries out the reaction isopentenyl diphosphate + dimethylallyl diphosphate = (2E)-geranyl diphosphate + diphosphate. It catalyses the reaction isopentenyl diphosphate + (2E)-geranyl diphosphate = (2E,6E)-farnesyl diphosphate + diphosphate. The enzyme catalyses isopentenyl diphosphate + (2E,6E)-farnesyl diphosphate = (2E,6E,10E)-geranylgeranyl diphosphate + diphosphate. It functions in the pathway isoprenoid biosynthesis; farnesyl diphosphate biosynthesis; farnesyl diphosphate from geranyl diphosphate and isopentenyl diphosphate: step 1/1. Its pathway is isoprenoid biosynthesis; geranyl diphosphate biosynthesis; geranyl diphosphate from dimethylallyl diphosphate and isopentenyl diphosphate: step 1/1. The protein operates within isoprenoid biosynthesis; geranylgeranyl diphosphate biosynthesis; geranylgeranyl diphosphate from farnesyl diphosphate and isopentenyl diphosphate: step 1/1. Its function is as follows. Catalyzes the trans-addition of the three molecules of isopentenyl diphosphate (IPP) onto dimethylallyl pyrophosphate (DMAPP) to form geranylgeranyl pyrophosphate, an important precursor of carotenoids and geranylated proteins. This chain is Geranylgeranyl pyrophosphate synthase, found in Mus musculus (Mouse).